The following is a 304-amino-acid chain: Aspartate carbamoyltransferase catalytic subunit (304 aa).

Carbamoyl phosphate-binding residues include arginine 55 and threonine 56. Residue lysine 83 participates in L-aspartate binding. Arginine 105, histidine 133, and glutamine 136 together coordinate carbamoyl phosphate. Arginine 166 and arginine 220 together coordinate L-aspartate. The carbamoyl phosphate site is built by glycine 261 and proline 262.

This sequence belongs to the aspartate/ornithine carbamoyltransferase superfamily. ATCase family. As to quaternary structure, heterododecamer (2C3:3R2) of six catalytic PyrB chains organized as two trimers (C3), and six regulatory PyrI chains organized as three dimers (R2).

The enzyme catalyses carbamoyl phosphate + L-aspartate = N-carbamoyl-L-aspartate + phosphate + H(+). It functions in the pathway pyrimidine metabolism; UMP biosynthesis via de novo pathway; (S)-dihydroorotate from bicarbonate: step 2/3. Catalyzes the condensation of carbamoyl phosphate and aspartate to form carbamoyl aspartate and inorganic phosphate, the committed step in the de novo pyrimidine nucleotide biosynthesis pathway. In Caldanaerobacter subterraneus subsp. tengcongensis (strain DSM 15242 / JCM 11007 / NBRC 100824 / MB4) (Thermoanaerobacter tengcongensis), this protein is Aspartate carbamoyltransferase catalytic subunit.